The following is a 457-amino-acid chain: MADQKQRVTVIGGGLAGTECAYQLSRRGVPVVLREMKPQKRSPAHKSDTLAELVCSNSLRSDNPESAIGLLHAELRALGSLVLSAADANRVPAGDALAVERERFSAAITESLLRQPGVELVAGEVEQLPEDGPVVIATGPLTSDALTRELERHVGTRLYFYDSIAPILSADSIDMNVAFRQSRYGKGGGDDYLNLPMTKDEYYRFIAEVKAGQKVVPHAFEEPKYFEGCLPIEVMAERGDDTLAYGPMKPVGLRDPRTGQEPYAVVQLRMEDVGGTSWNMVGFQTRLTWGEQKRIFSSFIPGLQQAEFLRMGQIHRNTFIDSPRLLAKDLSLKTEPRLYFAGQISGVEGYVESAACGYLVALALHARLTGTEFVPPPATTAMGALLRHVTGEAHPPDYPHQPSNISFGIFSPLTGRMKKAEKRAAYSARAKQDLAAWLPHAGVPAAGAPEHVDQRSA.

12–17 contributes to the FAD binding site; that stretch reads GGGLAG.

It belongs to the MnmG family. TrmFO subfamily. FAD serves as cofactor.

Its subcellular location is the cytoplasm. The enzyme catalyses uridine(54) in tRNA + (6R)-5,10-methylene-5,6,7,8-tetrahydrofolate + NADH + H(+) = 5-methyluridine(54) in tRNA + (6S)-5,6,7,8-tetrahydrofolate + NAD(+). It carries out the reaction uridine(54) in tRNA + (6R)-5,10-methylene-5,6,7,8-tetrahydrofolate + NADPH + H(+) = 5-methyluridine(54) in tRNA + (6S)-5,6,7,8-tetrahydrofolate + NADP(+). Catalyzes the folate-dependent formation of 5-methyl-uridine at position 54 (M-5-U54) in all tRNAs. In Myxococcus xanthus (strain DK1622), this protein is Methylenetetrahydrofolate--tRNA-(uracil-5-)-methyltransferase TrmFO.